The following is a 149-amino-acid chain: Ribonuclease H (149 aa).

The 142-residue stretch at 4–145 folds into the RNase H type-1 domain; the sequence is QRGVVEAFTD…ADALANQGID (142 aa). Residues Asp-13, Glu-51, Asp-73, and Asp-137 each coordinate Mg(2+).

This sequence belongs to the RNase H family. As to quaternary structure, monomer. Requires Mg(2+) as cofactor.

The protein resides in the cytoplasm. The catalysed reaction is Endonucleolytic cleavage to 5'-phosphomonoester.. Endonuclease that specifically degrades the RNA of RNA-DNA hybrids. The polypeptide is Ribonuclease H (Halorhodospira halophila (strain DSM 244 / SL1) (Ectothiorhodospira halophila (strain DSM 244 / SL1))).